Consider the following 247-residue polypeptide: Adenosylcobinamide-GDP ribazoletransferase (247 aa).

Helical transmembrane passes span 34–54, 59–79, 113–133, and 194–214; these read IITF…VFMV, CGVP…TGGF, GGLA…ELAL, and VLLP…AIFI.

The protein belongs to the CobS family. Requires Mg(2+) as cofactor.

The protein localises to the cell inner membrane. The catalysed reaction is alpha-ribazole + adenosylcob(III)inamide-GDP = adenosylcob(III)alamin + GMP + H(+). It carries out the reaction alpha-ribazole 5'-phosphate + adenosylcob(III)inamide-GDP = adenosylcob(III)alamin 5'-phosphate + GMP + H(+). The protein operates within cofactor biosynthesis; adenosylcobalamin biosynthesis; adenosylcobalamin from cob(II)yrinate a,c-diamide: step 7/7. Functionally, joins adenosylcobinamide-GDP and alpha-ribazole to generate adenosylcobalamin (Ado-cobalamin). Also synthesizes adenosylcobalamin 5'-phosphate from adenosylcobinamide-GDP and alpha-ribazole 5'-phosphate. The sequence is that of Adenosylcobinamide-GDP ribazoletransferase from Escherichia coli (strain ATCC 8739 / DSM 1576 / NBRC 3972 / NCIMB 8545 / WDCM 00012 / Crooks).